The chain runs to 228 residues: Enolase-phosphatase E1 (228 aa).

This sequence belongs to the HAD-like hydrolase superfamily. MasA/MtnC family. Monomer. The cofactor is Mg(2+).

The catalysed reaction is 5-methylsulfanyl-2,3-dioxopentyl phosphate + H2O = 1,2-dihydroxy-5-(methylsulfanyl)pent-1-en-3-one + phosphate. Its pathway is amino-acid biosynthesis; L-methionine biosynthesis via salvage pathway; L-methionine from S-methyl-5-thio-alpha-D-ribose 1-phosphate: step 3/6. It functions in the pathway amino-acid biosynthesis; L-methionine biosynthesis via salvage pathway; L-methionine from S-methyl-5-thio-alpha-D-ribose 1-phosphate: step 4/6. Functionally, bifunctional enzyme that catalyzes the enolization of 2,3-diketo-5-methylthiopentyl-1-phosphate (DK-MTP-1-P) into the intermediate 2-hydroxy-3-keto-5-methylthiopentenyl-1-phosphate (HK-MTPenyl-1-P), which is then dephosphorylated to form the acireductone 1,2-dihydroxy-3-keto-5-methylthiopentene (DHK-MTPene). The polypeptide is Enolase-phosphatase E1 (Picosynechococcus sp. (strain ATCC 27264 / PCC 7002 / PR-6) (Agmenellum quadruplicatum)).